Here is a 101-residue protein sequence, read N- to C-terminus: Small ribosomal subunit protein uS14 (101 aa).

This sequence belongs to the universal ribosomal protein uS14 family. Part of the 30S ribosomal subunit. Contacts proteins S3 and S10.

Its function is as follows. Binds 16S rRNA, required for the assembly of 30S particles and may also be responsible for determining the conformation of the 16S rRNA at the A site. The sequence is that of Small ribosomal subunit protein uS14 from Maricaulis maris (strain MCS10) (Caulobacter maris).